The following is a 160-amino-acid chain: MAVIKKPDLSDPVLKMKLAKGMGHNYYGEPAWPNDLLYIFPVCIFGTFAIVIGLSVMEPAAMGEPANPFATPLEILPEWYFYPVFQLLRVIPNKLLGVLLMAAVPAGLLTVPFIENINKFQNPFRRPIATTVFLLGTVVAVYLGIGSTFPIDQSLTLGLF.

The next 3 helical transmembrane spans lie at 36-56 (LLYI…GLSV), 95-115 (LLGV…PFIE), and 131-151 (TVFL…TFPI).

Belongs to the cytochrome b family. PetD subfamily. As to quaternary structure, the 4 large subunits of the cytochrome b6-f complex are cytochrome b6, subunit IV (17 kDa polypeptide, petD), cytochrome f and the Rieske protein, while the 4 small subunits are petG, petL, petM and petN. The complex functions as a dimer.

Its subcellular location is the plastid. It localises to the chloroplast thylakoid membrane. Functionally, component of the cytochrome b6-f complex, which mediates electron transfer between photosystem II (PSII) and photosystem I (PSI), cyclic electron flow around PSI, and state transitions. This Stigeoclonium helveticum (Green alga) protein is Cytochrome b6-f complex subunit 4.